Here is a 290-residue protein sequence, read N- to C-terminus: 4-hydroxy-tetrahydrodipicolinate synthase (290 aa).

Position 44 (Thr-44) interacts with pyruvate. Tyr-132 serves as the catalytic Proton donor/acceptor. Lys-160 acts as the Schiff-base intermediate with substrate in catalysis. Position 202 (Ile-202) interacts with pyruvate.

The protein belongs to the DapA family. In terms of assembly, homotetramer; dimer of dimers.

The protein resides in the cytoplasm. It carries out the reaction L-aspartate 4-semialdehyde + pyruvate = (2S,4S)-4-hydroxy-2,3,4,5-tetrahydrodipicolinate + H2O + H(+). It functions in the pathway amino-acid biosynthesis; L-lysine biosynthesis via DAP pathway; (S)-tetrahydrodipicolinate from L-aspartate: step 3/4. Its function is as follows. Catalyzes the condensation of (S)-aspartate-beta-semialdehyde [(S)-ASA] and pyruvate to 4-hydroxy-tetrahydrodipicolinate (HTPA). This is 4-hydroxy-tetrahydrodipicolinate synthase from Citrifermentans bemidjiense (strain ATCC BAA-1014 / DSM 16622 / JCM 12645 / Bem) (Geobacter bemidjiensis).